The following is a 751-amino-acid chain: Phosphoribosylformylglycinamidine synthase subunit PurL (751 aa).

Residue histidine 54 is part of the active site. The ATP site is built by tyrosine 57 and lysine 106. A Mg(2+)-binding site is contributed by glutamate 108. Residues 109–112 (SHNH) and arginine 131 contribute to the substrate site. Catalysis depends on histidine 110, which acts as the Proton acceptor. Aspartate 132 is a binding site for Mg(2+). Glutamine 256 provides a ligand contact to substrate. Residue aspartate 284 participates in Mg(2+) binding. A substrate-binding site is contributed by 328–330 (ESQ). The ATP site is built by aspartate 516 and glycine 553. Mg(2+) is bound at residue asparagine 554. Serine 556 contacts substrate.

This sequence belongs to the FGAMS family. In terms of assembly, monomer. Part of the FGAM synthase complex composed of 1 PurL, 1 PurQ and 2 PurS subunits.

Its subcellular location is the cytoplasm. The catalysed reaction is N(2)-formyl-N(1)-(5-phospho-beta-D-ribosyl)glycinamide + L-glutamine + ATP + H2O = 2-formamido-N(1)-(5-O-phospho-beta-D-ribosyl)acetamidine + L-glutamate + ADP + phosphate + H(+). It functions in the pathway purine metabolism; IMP biosynthesis via de novo pathway; 5-amino-1-(5-phospho-D-ribosyl)imidazole from N(2)-formyl-N(1)-(5-phospho-D-ribosyl)glycinamide: step 1/2. Functionally, part of the phosphoribosylformylglycinamidine synthase complex involved in the purines biosynthetic pathway. Catalyzes the ATP-dependent conversion of formylglycinamide ribonucleotide (FGAR) and glutamine to yield formylglycinamidine ribonucleotide (FGAM) and glutamate. The FGAM synthase complex is composed of three subunits. PurQ produces an ammonia molecule by converting glutamine to glutamate. PurL transfers the ammonia molecule to FGAR to form FGAM in an ATP-dependent manner. PurS interacts with PurQ and PurL and is thought to assist in the transfer of the ammonia molecule from PurQ to PurL. The protein is Phosphoribosylformylglycinamidine synthase subunit PurL of Nocardioides sp. (strain ATCC BAA-499 / JS614).